Consider the following 1411-residue polypeptide: Early endosome antigen 1 (1411 aa).

Positions 1-27 (MLRRILQRTPGRVGSQGSDLDSSATPI) are disordered. Residues 15 to 27 (SQGSDLDSSATPI) show a composition bias toward polar residues. The C2H2-type zinc finger occupies 41–64 (FICPQCMKSLGSADELFKHYEAVH). S52 and S70 each carry phosphoserine. Residues 74-1348 (GESNLALKRD…IKHTQALNRK (1275 aa)) are a coiled coil. Residues 473 to 501 (VTNSTELQHQLDKTKQQHQEQQALQQSTT) are disordered. The span at 481 to 490 (HQLDKTKQQH) shows a compositional bias: basic and acidic residues. The FYVE-type zinc finger occupies 1352-1410 (DNEVQNCMACGKGFSVTVRRHHCRQCGNIFCAECSAKNALTPSSKKPVRVCDACFNDLQ). Positions 1358, 1361, 1374, 1377, 1382, 1385, 1402, and 1405 each coordinate Zn(2+).

In terms of assembly, homodimer. Binds STX6. Binds RAB5A, RAB5B, RAB5C and RAB22A that have been activated by GTP-binding. Interacts with RAB31. Interacts with ERBB2. Interacts with SAMD9 and SAMD9L. May interact with PLEKHF2.

The protein localises to the cytoplasm. It localises to the early endosome membrane. In terms of biological role, binds phospholipid vesicles containing phosphatidylinositol 3-phosphate and participates in endosomal trafficking. This is Early endosome antigen 1 (EEA1) from Homo sapiens (Human).